A 120-amino-acid chain; its full sequence is Acyl carrier protein, mitochondrial (120 aa).

The region spanning 43–117 (KEITDRVIGV…ETISYLRKTP (75 aa)) is the Carrier domain. An O-(pantetheine 4'-phosphoryl)serine modification is found at serine 77.

This sequence belongs to the acyl carrier protein (ACP) family. In terms of assembly, complex I is composed of about 45 different subunits. In terms of processing, 4'-phosphopantetheine is transferred from CoA to a specific serine of apo-ACP by acpS. This modification is essential for activity because fatty acids are bound in thioester linkage to the sulfhydryl of the prosthetic group.

The protein localises to the mitochondrion. It functions in the pathway lipid metabolism; fatty acid biosynthesis. In terms of biological role, carrier of the growing fatty acid chain in fatty acid biosynthesis. May be involved in the synthesis of very-long-chain fatty acids. Accessory and non-catalytic subunit of the mitochondrial membrane respiratory chain NADH dehydrogenase (Complex I), which functions in the transfer of electrons from NADH to the respiratory chain. The chain is Acyl carrier protein, mitochondrial (ndufab1) from Dictyostelium discoideum (Social amoeba).